Consider the following 236-residue polypeptide: uncharacterized protein (236 aa).

Residues 5 to 73 form the HTH gntR-type domain; it reads QSTVENAKEK…DRKGWFVTQP (69 aa). The H-T-H motif DNA-binding region spans 33–52; sequence ERELGELLGIKRMTLRQALL.

This is an uncharacterized protein from Escherichia coli O157:H7.